The following is a 136-amino-acid chain: Methylglyoxal synthase (136 aa).

Residues 1 to 136 (MKIALIAHDR…REVVREENEA (136 aa)) form the MGS-like domain. Substrate contacts are provided by residues His-8, Lys-12, 34 to 37 (TGTT), and 54 to 55 (SG). Asp-60 acts as the Proton donor/acceptor in catalysis. Position 87 (His-87) interacts with substrate.

The protein belongs to the methylglyoxal synthase family.

It carries out the reaction dihydroxyacetone phosphate = methylglyoxal + phosphate. Functionally, catalyzes the formation of methylglyoxal from dihydroxyacetone phosphate. This Brevibacillus brevis (strain 47 / JCM 6285 / NBRC 100599) protein is Methylglyoxal synthase.